The chain runs to 1076 residues: Zinc-regulated protein 8 (1076 aa).

A compositionally biased stretch (basic residues) spans 1 to 11 (MRSFIKAHKKS). Disordered stretches follow at residues 1–66 (MRSF…PGFE), 85–162 (SNLN…RTTD), 190–223 (PASP…TSPS), and 234–253 (KNKG…SSKK). A compositionally biased stretch (polar residues) spans 23–34 (NFSGNTNNSSQR). Positions 93–106 (STPTTSTNQTTSNS) are enriched in low complexity. Polar residues predominate over residues 107-117 (FVLQNPPTKNT). Over residues 118–128 (GPPPPLPPPLF) the composition is skewed to pro residues. 2 stretches are compositionally biased toward polar residues: residues 193 to 206 (PASN…SKQF) and 214 to 223 (ENLTSTTSPS). Residues Ser275 and Ser354 each carry the phosphoserine modification. Disordered regions lie at residues 357-450 (IRHG…DDES), 534-557 (LSDD…ESDN), and 566-585 (GKET…SLGE). Positions 362–378 (LQSSPSKVNKNDSQNET) are enriched in polar residues. A phosphoserine mark is found at Ser403 and Ser407. Residues 408 to 418 (VNEKETHKAND) are compositionally biased toward basic and acidic residues. Residues 419-450 (CNDESSENGDGDNDHDDDYDDDDDDDDDDDES) are compositionally biased toward acidic residues. The span at 576–585 (GHHDDASLGE) shows a compositional bias: basic and acidic residues. Phosphoserine occurs at positions 632 and 676. Disordered stretches follow at residues 658–701 (NIIR…KPTV), 713–762 (SASD…PHSQ), 909–931 (RRTL…FSSV), 1000–1020 (HNVG…QISN), and 1042–1076 (PTNS…PKRA). 2 stretches are compositionally biased toward polar residues: residues 690 to 701 (LTGTTGSTKPTV) and 739 to 748 (QVSLQSSLYE).

The protein belongs to the ZRG8 family. Interacts with BUD27, GIS1 and SSD1.

It is found in the cytoplasm. Its subcellular location is the bud. The protein localises to the bud neck. The protein resides in the bud tip. In terms of biological role, involved in the integrity functions of RAM, a conserved signaling network that regulates maintenance of polarized growth and daughter-cell-specific transcription. The sequence is that of Zinc-regulated protein 8 (ZRG8) from Saccharomyces cerevisiae (strain ATCC 204508 / S288c) (Baker's yeast).